The chain runs to 341 residues: L-threonine 3-dehydrogenase (341 aa).

Cys38 contributes to the Zn(2+) binding site. Catalysis depends on charge relay system residues Thr40 and His43. 6 residues coordinate Zn(2+): His63, Glu64, Cys93, Cys96, Cys99, and Cys107. NAD(+)-binding positions include Ile175, Asp195, Arg200, 262-264 (LGI), and 286-287 (IY).

The protein belongs to the zinc-containing alcohol dehydrogenase family. In terms of assembly, homotetramer. The cofactor is Zn(2+).

It is found in the cytoplasm. The enzyme catalyses L-threonine + NAD(+) = (2S)-2-amino-3-oxobutanoate + NADH + H(+). Its pathway is amino-acid degradation; L-threonine degradation via oxydo-reductase pathway; glycine from L-threonine: step 1/2. Catalyzes the NAD(+)-dependent oxidation of L-threonine to 2-amino-3-ketobutyrate. The chain is L-threonine 3-dehydrogenase from Solibacter usitatus (strain Ellin6076).